The chain runs to 87 residues: uncharacterized protein (87 aa).

2 consecutive transmembrane segments (helical) span residues 7-27 (LFFI…LYSI) and 64-84 (GINI…IPLF).

Its subcellular location is the membrane. This is an uncharacterized protein from Schizosaccharomyces pombe (strain 972 / ATCC 24843) (Fission yeast).